A 549-amino-acid polypeptide reads, in one-letter code: Undecaprenyl phosphate-alpha-4-amino-4-deoxy-L-arabinose arabinosyl transferase (549 aa).

12 helical membrane-spanning segments follow: residues L9–I29, L80–L100, S112–A132, N133–L153, F176–L196, L204–L224, P256–P276, Q288–S308, L312–V332, N346–L366, F376–W396, and A402–P422.

This sequence belongs to the glycosyltransferase 83 family.

Its subcellular location is the cell inner membrane. It carries out the reaction 4-amino-4-deoxy-alpha-L-arabinopyranosyl di-trans,octa-cis-undecaprenyl phosphate + lipid IVA = lipid IIA + di-trans,octa-cis-undecaprenyl phosphate.. The protein operates within lipopolysaccharide metabolism; 4-amino-4-deoxy-beta-L-arabinose-lipid A biosynthesis. In terms of biological role, catalyzes the transfer of the L-Ara4N moiety of the glycolipid undecaprenyl phosphate-alpha-L-Ara4N to lipid A. The modified arabinose is attached to lipid A and is required for resistance to polymyxin and cationic antimicrobial peptides. This chain is Undecaprenyl phosphate-alpha-4-amino-4-deoxy-L-arabinose arabinosyl transferase, found in Pseudomonas aeruginosa (strain LESB58).